Here is a 235-residue protein sequence, read N- to C-terminus: 5'-methylthioadenosine/S-adenosylhomocysteine nucleosidase (235 aa).

E12 functions as the Proton acceptor in the catalytic mechanism. Substrate-binding positions include G78, M153, and 174 to 175 (ME). D198 functions as the Proton donor in the catalytic mechanism.

Belongs to the PNP/UDP phosphorylase family. MtnN subfamily.

The catalysed reaction is S-adenosyl-L-homocysteine + H2O = S-(5-deoxy-D-ribos-5-yl)-L-homocysteine + adenine. The enzyme catalyses S-methyl-5'-thioadenosine + H2O = 5-(methylsulfanyl)-D-ribose + adenine. It catalyses the reaction 5'-deoxyadenosine + H2O = 5-deoxy-D-ribose + adenine. The protein operates within amino-acid biosynthesis; L-methionine biosynthesis via salvage pathway; S-methyl-5-thio-alpha-D-ribose 1-phosphate from S-methyl-5'-thioadenosine (hydrolase route): step 1/2. Catalyzes the irreversible cleavage of the glycosidic bond in both 5'-methylthioadenosine (MTA) and S-adenosylhomocysteine (SAH/AdoHcy) to adenine and the corresponding thioribose, 5'-methylthioribose and S-ribosylhomocysteine, respectively. Also cleaves 5'-deoxyadenosine, a toxic by-product of radical S-adenosylmethionine (SAM) enzymes, into 5-deoxyribose and adenine. This chain is 5'-methylthioadenosine/S-adenosylhomocysteine nucleosidase, found in Geobacillus kaustophilus (strain HTA426).